The chain runs to 152 residues: Large ribosomal subunit protein bL9 (152 aa).

It belongs to the bacterial ribosomal protein bL9 family.

Binds to the 23S rRNA. The polypeptide is Large ribosomal subunit protein bL9 (Prochlorococcus marinus (strain MIT 9211)).